The following is a 484-amino-acid chain: Glutamyl-tRNA(Gln) amidotransferase subunit A (484 aa).

Active-site charge relay system residues include K77 and S152. S176 serves as the catalytic Acyl-ester intermediate.

It belongs to the amidase family. GatA subfamily. As to quaternary structure, heterotrimer of A, B and C subunits.

The enzyme catalyses L-glutamyl-tRNA(Gln) + L-glutamine + ATP + H2O = L-glutaminyl-tRNA(Gln) + L-glutamate + ADP + phosphate + H(+). Its function is as follows. Allows the formation of correctly charged Gln-tRNA(Gln) through the transamidation of misacylated Glu-tRNA(Gln) in organisms which lack glutaminyl-tRNA synthetase. The reaction takes place in the presence of glutamine and ATP through an activated gamma-phospho-Glu-tRNA(Gln). The chain is Glutamyl-tRNA(Gln) amidotransferase subunit A from Lacticaseibacillus casei (strain BL23) (Lactobacillus casei).